A 396-amino-acid chain; its full sequence is Ribosomal RNA large subunit methyltransferase I (396 aa).

The region spanning 2–81 (SVRLVLAKGR…ESIDIAFFSR (80 aa)) is the PUA domain.

Belongs to the methyltransferase superfamily. RlmI family.

Its subcellular location is the cytoplasm. It catalyses the reaction cytidine(1962) in 23S rRNA + S-adenosyl-L-methionine = 5-methylcytidine(1962) in 23S rRNA + S-adenosyl-L-homocysteine + H(+). In terms of biological role, specifically methylates the cytosine at position 1962 (m5C1962) of 23S rRNA. The sequence is that of Ribosomal RNA large subunit methyltransferase I from Escherichia coli O157:H7.